We begin with the raw amino-acid sequence, 268 residues long: Tryptophan synthase alpha chain (268 aa).

Residues E49 and D60 each act as proton acceptor in the active site.

The protein belongs to the TrpA family. Tetramer of two alpha and two beta chains.

It carries out the reaction (1S,2R)-1-C-(indol-3-yl)glycerol 3-phosphate + L-serine = D-glyceraldehyde 3-phosphate + L-tryptophan + H2O. The protein operates within amino-acid biosynthesis; L-tryptophan biosynthesis; L-tryptophan from chorismate: step 5/5. In terms of biological role, the alpha subunit is responsible for the aldol cleavage of indoleglycerol phosphate to indole and glyceraldehyde 3-phosphate. In Sodalis glossinidius (strain morsitans), this protein is Tryptophan synthase alpha chain.